The sequence spans 133 residues: MVNDTVADMITRIRNANLVRQTNVQVIASNTTNSIASILKDEGFVEKIQTIETDSGLSSLLITLKYQGKRRKPYITALKRISKPGLRVYANSREIPRVLGGIGIAIISTSKGIMTDRRARHEKVGGEILCYVW.

It belongs to the universal ribosomal protein uS8 family. In terms of assembly, part of the 30S ribosomal subunit.

The protein resides in the plastid. It localises to the chloroplast. In terms of biological role, one of the primary rRNA binding proteins, it binds directly to 16S rRNA central domain where it helps coordinate assembly of the platform of the 30S subunit. This Chlorokybus atmophyticus (Soil alga) protein is Small ribosomal subunit protein uS8c (rps8).